A 360-amino-acid chain; its full sequence is Proline-rich protein 11 (360 aa).

Disordered regions lie at residues 20-43 (KKKE…SPER) and 174-201 (PPTL…PPLA). Thr33 is modified (phosphothreonine). A Phosphoserine modification is found at Ser40. Pro residues predominate over residues 175-201 (PTLPQPASHFPPPPPPPPLPPPPPPLA). A Phosphodegron motif is present at residues 285 to 291 (LITPGKS). Thr287 is subject to Phosphothreonine. Ser291 bears the Phosphoserine mark. Positions 296–304 (RKLLRKVDV) match the D-box motif. The KEN box signature appears at 316 to 318 (KEN). Positions 325-330 (LTPVMT) match the Phosphodegron motif. A disordered region spans residues 340–360 (AHPRSPTPTLPLSTSSFDEQN). The residue at position 344 (Ser344) is a Phosphoserine. Phosphothreonine occurs at positions 346 and 348. Low complexity predominate over residues 349 to 360 (LPLSTSSFDEQN).

In terms of processing, ubiquitinated. Rapidly degraded by the proteasome; degradation may involve FBXW7-specific phosphorylated phosphodegron motifs. As to expression, ubiquitously expressed.

The protein localises to the cytoplasm. It localises to the nucleus. In terms of biological role, plays a critical role in cell cycle progression. This is Proline-rich protein 11 (PRR11) from Homo sapiens (Human).